A 273-amino-acid polypeptide reads, in one-letter code: MEKLIITAAICGAEVTKEHNPNVPYTVEEIVREAKSAYDAGASVIHLHVREDDGTPTQSKERFKMCVDAIKEACPDAIIQPSTGGAVGMTDEERLQPVFLKPEMASLDCGTCNFGGDEIFVNTENMIINFSKYMIKNGVKPECEVFDKSMIDMAIRLAKKGHIQTPMHFNFVMGVNGGISATPRDLVFLIGSIPSESSFTVSAMGRNQFPMAAMAIITGGHVRVGFEDNVYIEKGVPAKSNGELVEKVVRLAKEFGRPVATPSEAREILGISK.

E14 contacts (5S)-5-amino-3-oxohexanoate. Zn(2+) contacts are provided by H46 and H48. Residues S82, G85, and S106 each coordinate (5S)-5-amino-3-oxohexanoate. Residue E227 participates in Zn(2+) binding.

The protein belongs to the BKACE family. Kce subfamily. Homotetramer. Requires Zn(2+) as cofactor.

The enzyme catalyses (5S)-5-amino-3-oxohexanoate + acetyl-CoA = (3S)-3-aminobutanoyl-CoA + acetoacetate. Its pathway is amino-acid degradation; L-lysine degradation via acetate pathway. Its function is as follows. Involved in the anaerobic fermentation of lysine. Catalyzes the reversible reaction between 3-keto-5-aminohexanoate (KAH) and acetyl-CoA to form 3-aminobutyryl-CoA and acetoacetate. The reaction involves the deprotonation of KAH, the nucleophilic addition onto acetyl-CoA and the intramolecular transfer of the CoA moiety. The chain is 3-keto-5-aminohexanoate cleavage enzyme from Acetoanaerobium sticklandii (strain ATCC 12662 / DSM 519 / JCM 1433 / CCUG 9281 / NCIMB 10654 / HF) (Clostridium sticklandii).